A 658-amino-acid chain; its full sequence is DNA-binding protein Rfx5 (658 aa).

Positions Met-1–Ser-10 are enriched in basic and acidic residues. Residues Met-1–Thr-28 form a disordered region. Ala-2 carries the post-translational modification N-acetylalanine. Position 10 is a phosphoserine (Ser-10). Residues Gly-24–Met-89 are N-terminal domain. The segment at Leu-61–Leu-65 is leucine-rich region; critical for dimer formation and for interaction with RFXAP. A DNA-binding region (RFX-type winged-helix) is located at residues Ala-91–Thr-167. Residues Pro-172 to Leu-177 carry the PxLPxI/L motif; mediates interaction with RFXANK motif. The residue at position 184 (Ser-184) is a Phosphoserine. Disordered stretches follow at residues Leu-250–Pro-315, Ala-382–Ala-422, Val-443–Pro-602, and Lys-624–Pro-658. Residues Gly-277 to Val-309 show a composition bias toward basic and acidic residues. Composition is skewed to gly residues over residues Ala-382–Pro-398 and Pro-406–Ala-422. Basic and acidic residues-rich tracts occupy residues Pro-465 to Ala-476 and Pro-489 to Gln-498. The segment covering Lys-506–Pro-516 has biased composition (basic residues). The segment covering Pro-648–Pro-658 has biased composition (basic and acidic residues).

The protein belongs to the RFX family. As to quaternary structure, homodimer. The RFX heterotetrameric complex consists of 2 molecules of RFX5 and one each of RFXAP and RFX-B/RFXANK; with each subunit representing a separate complementation group. Interacts (via PxLPxI/L motif) with RFXANK (via ankyrin repeats); the interaction is direct. RFX forms cooperative DNA binding complexes with X2BP and CBF/NF-Y. RFX associates with CIITA to form an active transcriptional complex. In terms of processing, phosphorylated.

The protein localises to the nucleus. Activates transcription from class II MHC promoters. Recognizes X-boxes. Mediates cooperative binding between RFX and NF-Y. RFX binds the X1 box of MHC-II promoters. This Mus musculus (Mouse) protein is DNA-binding protein Rfx5 (Rfx5).